The chain runs to 186 residues: Nicotinamide-nucleotide adenylyltransferase (186 aa).

This sequence belongs to the archaeal NMN adenylyltransferase family.

It localises to the cytoplasm. The enzyme catalyses beta-nicotinamide D-ribonucleotide + ATP + H(+) = diphosphate + NAD(+). It participates in cofactor biosynthesis; NAD(+) biosynthesis; NAD(+) from nicotinamide D-ribonucleotide: step 1/1. The protein is Nicotinamide-nucleotide adenylyltransferase of Pyrococcus horikoshii (strain ATCC 700860 / DSM 12428 / JCM 9974 / NBRC 100139 / OT-3).